The following is a 90-amino-acid chain: Small ribosomal subunit protein uS15c (90 aa).

It belongs to the universal ribosomal protein uS15 family. In terms of assembly, part of the 30S ribosomal subunit.

It is found in the plastid. It localises to the chloroplast. This chain is Small ribosomal subunit protein uS15c (rps15-A), found in Hordeum vulgare (Barley).